The sequence spans 195 residues: dCTP deaminase (195 aa).

DCTP is bound by residues 105–110, aspartate 123, 131–133, glutamine 152, tyrosine 166, lysine 173, and glutamine 177; these read RSSLGR and TLE. Catalysis depends on glutamate 133, which acts as the Proton donor/acceptor. A disordered region spans residues 159–195; it reads KSPAERPYGAERGSKYQGQTGPQASRIQGDREFGGDQ. Residues 160–172 show a composition bias toward basic and acidic residues; sequence SPAERPYGAERGS. The segment covering 174-184 has biased composition (polar residues); it reads YQGQTGPQASR. Basic and acidic residues predominate over residues 186-195; it reads QGDREFGGDQ.

It belongs to the dCTP deaminase family. In terms of assembly, homotrimer.

The enzyme catalyses dCTP + H2O + H(+) = dUTP + NH4(+). It participates in pyrimidine metabolism; dUMP biosynthesis; dUMP from dCTP (dUTP route): step 1/2. In terms of biological role, catalyzes the deamination of dCTP to dUTP. This Natronomonas pharaonis (strain ATCC 35678 / DSM 2160 / CIP 103997 / JCM 8858 / NBRC 14720 / NCIMB 2260 / Gabara) (Halobacterium pharaonis) protein is dCTP deaminase.